The following is a 366-amino-acid chain: NADH-quinone oxidoreductase subunit D (366 aa).

This sequence belongs to the complex I 49 kDa subunit family. NDH-1 is composed of 14 different subunits. Subunits NuoB, C, D, E, F, and G constitute the peripheral sector of the complex.

The protein localises to the cell membrane. It carries out the reaction a quinone + NADH + 5 H(+)(in) = a quinol + NAD(+) + 4 H(+)(out). Its function is as follows. NDH-1 shuttles electrons from NADH, via FMN and iron-sulfur (Fe-S) centers, to quinones in the respiratory chain. The immediate electron acceptor for the enzyme in this species is believed to be a menaquinone. Couples the redox reaction to proton translocation (for every two electrons transferred, four hydrogen ions are translocated across the cytoplasmic membrane), and thus conserves the redox energy in a proton gradient. In Bacillus cytotoxicus (strain DSM 22905 / CIP 110041 / 391-98 / NVH 391-98), this protein is NADH-quinone oxidoreductase subunit D.